The chain runs to 372 residues: DNA replication and repair protein RecF (372 aa).

Residue 30 to 37 (GENAQGKT) coordinates ATP.

The protein belongs to the RecF family.

The protein resides in the cytoplasm. Its function is as follows. The RecF protein is involved in DNA metabolism; it is required for DNA replication and normal SOS inducibility. RecF binds preferentially to single-stranded, linear DNA. It also seems to bind ATP. The sequence is that of DNA replication and repair protein RecF from Exiguobacterium sp. (strain ATCC BAA-1283 / AT1b).